The sequence spans 354 residues: Selenide, water dikinase (354 aa).

C23 is an active-site residue. ATP-binding positions include K26 and 54–56 (TAD). D57 contributes to the Mg(2+) binding site. ATP is bound by residues D74, D97, and 145–147 (GHS). Residue D97 coordinates Mg(2+). D233 provides a ligand contact to Mg(2+).

It belongs to the selenophosphate synthase 1 family. Class I subfamily. As to quaternary structure, homodimer. Mg(2+) is required as a cofactor.

It catalyses the reaction hydrogenselenide + ATP + H2O = selenophosphate + AMP + phosphate + 2 H(+). Synthesizes selenophosphate from selenide and ATP. The sequence is that of Selenide, water dikinase from Paraburkholderia xenovorans (strain LB400).